A 403-amino-acid chain; its full sequence is Leu/Ile/Val-binding protein homolog 8 (403 aa).

A signal peptide spans 1–26; it reads MRLSRLLIGASLGVALSSTVFTAALA.

The protein belongs to the leucine-binding protein family.

Functionally, component of an amino-acid transport system. The sequence is that of Leu/Ile/Val-binding protein homolog 8 from Brucella melitensis biotype 1 (strain ATCC 23456 / CCUG 17765 / NCTC 10094 / 16M).